The primary structure comprises 437 residues: Transcription factor 12 (437 aa).

3 disordered regions span residues 1 to 68, 80 to 123, and 244 to 335; these read EFHD…QTGD, PDHT…YENS, and ASNT…ERRM. Residues 13–37 are compositionally biased toward polar residues; the sequence is VSPTDISTSLPPMSSFHRGSTSSSP. At Thr44 the chain carries Phosphothreonine. Ser64 bears the Phosphoserine mark. A compositionally biased stretch (low complexity) spans 83–94; sequence TSSSFPSNPSTP. Composition is skewed to polar residues over residues 95-107 and 114-123; these read VGSPSPLTGTSQW and APSSPSYENS. Composition is skewed to basic and acidic residues over residues 273–285 and 291–306; these read IKTENKEKDENLH and DDMKSDDESSQKDIKV. Lys274 is covalently cross-linked (Glycyl lysine isopeptide (Lys-Gly) (interchain with G-Cter in SUMO2)). Ser295 carries the post-translational modification Phosphoserine. A Glycyl lysine isopeptide (Lys-Gly) (interchain with G-Cter in SUMO2) cross-link involves residue Lys305. Thr312 is modified (phosphothreonine). Phosphoserine is present on residues Ser313 and Ser314. Residues 323–335 are compositionally biased toward basic and acidic residues; it reads PEQKIEREKERRM. Positions 332–385 constitute a bHLH domain; sequence ERRMANNARERLRVRDINEAFKELGRMCQLHLKSEKPQTKLLILHQAVAVILSL. Glycyl lysine isopeptide (Lys-Gly) (interchain with G-Cter in SUMO2) cross-links involve residues Lys364 and Lys408. The segment at 387-410 is class A specific domain; it reads QQVRERNLNPKAACLKRREEEKVS. The disordered stretch occupies residues 405–437; sequence EEEKVSAASAEPPTTLPGTHPGLSETTNPMGHL. The span at 416–427 shows a compositional bias: low complexity; sequence PPTTLPGTHPGL. The segment covering 428–437 has biased composition (polar residues); it reads SETTNPMGHL.

As to quaternary structure, efficient DNA binding requires dimerization with another bHLH protein. Forms homo- or heterooligomers with myogenin, E12 and ITF2 proteins. Interacts with NEUROD2. Interacts with PTF1A. Interacts with RUNX1T1. Interacts with BHLHA9.

The protein resides in the nucleus. Functionally, transcriptional regulator. Involved in the initiation of neuronal differentiation. Activates transcription by binding to the E box (5'-CANNTG-3'). Participates in the control of inducible RP4 gene expression in salivary cells. Binds to the RIPE3 element of the insulin II promoter. May be involved in the functional network that regulates the development of the GnRH axis. The protein is Transcription factor 12 (TCF12) of Mesocricetus auratus (Golden hamster).